We begin with the raw amino-acid sequence, 394 residues long: Acetyl-CoA acetyltransferase (394 aa).

Cysteine 88 (acyl-thioester intermediate) is an active-site residue. Catalysis depends on proton acceptor residues histidine 349 and cysteine 379.

Belongs to the thiolase-like superfamily. Thiolase family.

Its subcellular location is the cytoplasm. The enzyme catalyses 2 acetyl-CoA = acetoacetyl-CoA + CoA. The protein operates within metabolic intermediate biosynthesis; (R)-mevalonate biosynthesis; (R)-mevalonate from acetyl-CoA: step 1/3. This Escherichia coli (strain K12) protein is Acetyl-CoA acetyltransferase (atoB).